The chain runs to 120 residues: C-type natriuretic peptide 4 (120 aa).

Residues 1–22 (MNLSYLVACGLMITLLSVRMGA) form the signal peptide. The propeptide occupies 23 to 96 (KPLSQAQQKS…PRRHKTGIKK (74 aa)). An intrachain disulfide couples C104 to C120.

Belongs to the natriuretic peptide family.

The protein localises to the secreted. Its function is as follows. Exhibits natriuretic and vasodepressant activity. Has cGMP-stimulating activity. May help to regulate body fluid homeostasis in a variety of aquatic environments. The protein is C-type natriuretic peptide 4 of Takifugu rubripes (Japanese pufferfish).